The sequence spans 188 residues: FMN-dependent NADPH-azoreductase (188 aa).

The protein belongs to the azoreductase type 2 family. As to quaternary structure, homotetramer. The cofactor is FMN.

Functionally, catalyzes the reductive cleavage of azo bond in aromatic azo compounds to the corresponding amines. Requires NADPH, but not NADH, as an electron donor for its activity. The protein is FMN-dependent NADPH-azoreductase (azo1) of Staphylococcus aureus (strain MSSA476).